A 480-amino-acid chain; its full sequence is MKRWWLNSMLFKKEFEHRCRLSKSTSSLGPIENASESKDPNINDTDKNIQSWGGHDNYSNVDLFFGVKDLRNLISDDTFLVKDSNGDIYSLYFDIENHIFEIDNDHPELESSFYRNSSYLNNGSKSKNPEHDPYMNDTQYTWNNHINSCIDSYLQSQICIDSYIVSGSDNSSNNYISSSICGESGNSSKNEDARTSDPIIRESSTDLDVTQKYRHLWVQCENCYGLNYKKFFKSKMNLCEQCGYHLKMSSSDRIELSIDPGTWEPMDEDMVSLDPIEFHSEEEPYKNRIDSYQRKTGLTEAVQTGIGQLDGINVAIAVMDFQFMGGSMGSVVGEKITRLIEYATKEFLPLIIVCASGGARMQEGSLSLMQMAKISSALYDYQSNKKLFYVPILTSPTTGGVTASFGMLGDIIIAEPNAYIAFAGKRVIEQTLNKTVPDGSQAAEYLFQKGLFDLIVPRNPLKSVLSELFQLHTFFPLNQN.

The segment at 25–48 (TSSLGPIENASESKDPNINDTDKN) is disordered. The segment covering 35 to 47 (SESKDPNINDTDK) has biased composition (basic and acidic residues). Residues 216 to 480 (LWVQCENCYG…LHTFFPLNQN (265 aa)) form the CoA carboxyltransferase N-terminal domain. Positions 220, 223, 239, and 242 each coordinate Zn(2+). The segment at 220–242 (CENCYGLNYKKFFKSKMNLCEQC) adopts a C4-type zinc-finger fold.

It belongs to the AccD/PCCB family. Acetyl-CoA carboxylase is a heterohexamer composed of biotin carboxyl carrier protein, biotin carboxylase and 2 subunits each of ACCase subunit alpha and ACCase plastid-coded subunit beta (accD). Requires Zn(2+) as cofactor.

The protein localises to the plastid. The protein resides in the chloroplast stroma. The enzyme catalyses N(6)-carboxybiotinyl-L-lysyl-[protein] + acetyl-CoA = N(6)-biotinyl-L-lysyl-[protein] + malonyl-CoA. It functions in the pathway lipid metabolism; malonyl-CoA biosynthesis; malonyl-CoA from acetyl-CoA: step 1/1. Component of the acetyl coenzyme A carboxylase (ACC) complex. Biotin carboxylase (BC) catalyzes the carboxylation of biotin on its carrier protein (BCCP) and then the CO(2) group is transferred by the transcarboxylase to acetyl-CoA to form malonyl-CoA. This Helianthus annuus (Common sunflower) protein is Acetyl-coenzyme A carboxylase carboxyl transferase subunit beta, chloroplastic.